Reading from the N-terminus, the 322-residue chain is MDSISLRVALNDGNFIPVLGFGTTVPEKVAKDEVIKATKIAIDNGFRHFDSAYLYEVEEEVGQAIRSKIEDGTVKREDIFYTSKLWSTFHRPELVRTCLEKTLKSTQLDYVDLYIIHFPMALQPGDIFFPRDEHGKLLFETVDICDTWEAMEKCKDAGLAKSIGVSNFNCRQLERILNKPGLKYKPVCNQVECHLYLNQSKMLDYCKSKDIILVSYCTLGSSRDKTWVDQKSPVLLDDPVLCAIAKKYKQTPALVALRYQLQRGVVPLIRSFNAKRIKELTQVFEFQLASEDMKALDGLNRNFRYNNAKYFDDHPNHPFTDE.

M1 carries the blocked amino end (Met) modification. Residues 20 to 24 (GFGTT) and D50 each bind NADP(+). Y55 functions as the Proton donor in the catalytic mechanism. H117 contacts substrate. NADP(+) is bound by residues 166–167 (SN), Q190, and 216–221 (YCTLGS). W227 is a binding site for substrate. Position 270-280 (270-280 (RSFNAKRIKEL)) interacts with NADP(+).

This sequence belongs to the aldo/keto reductase family. In terms of assembly, monomer. In brain, highest levels found in olfactory bulb. Moderate levels present in cerebellum, cerebral cortex, hypothalamus and pituitary. Low levels present in amygdala, brain stem, caudate putamen, cingulate cortex, hippocampus, midbrain, and thalamus.

It is found in the cytoplasm. It carries out the reaction a 3alpha-hydroxysteroid + NADP(+) = a 3-oxosteroid + NADPH + H(+). It catalyses the reaction a 3alpha-hydroxysteroid + NAD(+) = a 3-oxosteroid + NADH + H(+). Its activity is regulated as follows. Potently inhibited by the nonsteroidal anti-inflammatory drugs (NSAID). Besides being a 3-alpha-hydroxysteroid dehydrogenase, the enzyme can accomplish diverse functions: as quinone reductase, as an aromatic alcohol dehydrogenase, as dihydrodiol dehydrogenase, and as 9-, 11-, and 15-hydroxyprostaglandin dehydrogenase. This is 3-alpha-hydroxysteroid dehydrogenase (Akr1c9) from Rattus norvegicus (Rat).